Consider the following 200-residue polypeptide: ASI1-immunoprecipitated protein 1 (200 aa).

The 84-residue stretch at 18-101 (RTVYVDELTP…RPVRACAAEP (84 aa)) folds into the RRM domain.

As to quaternary structure, component of the ASI1-AIPP1-EDM2 (AAE) RNA regulatory complex composed of at least AIPP1/EDM3, ASI1 and EDM2 and may contain CPL2, AIPP2 and AIPP3/BDT1. Binds directly to ASI1 and EDM2 and may function as a bridge protein between them. Co-associates with EDM2 to histone H3 lysine 9 dimethylation (H3K9me2)-marked chromatin and transcripts at a critical proximal polyadenylation site of RPP7 to hamper proximal transcript polyadeylation/termination.

The protein localises to the nucleus. Functionally, prevents gene silencing by suppressing CHG methylation as well as histone H3 lysine 9 dimethylation (H3K9me2) status at target loci. Collaboratively with ASI1 and EDM2, the AAE complex regulates alternative RNA processing (e.g. alternative splicing) and epigenetic silencing (e.g. H3K9me2) of intronic heterochromatin-containing genes as well as genic heterochromatin-containing genes by promoting distal 3' polyadenylation, thus being required for the accumulation of their full-length transcripts. May also modulate transposable elements (TE) expression. Mediates RPP7-dependent race-specific disease resistance by promoting histone H3 lysine 9 dimethylation (H3K9me2) at the proximal RPP7 polyadenylation site, thus controlling alternative polyadenylation of RPP7 immune receptor transcripts and facilitating 2-phosphoserine RNAPII occupancy. In cv. Columbia, required for RPP7-dependent disease resistance against the Hyaloperonospora arabidopsidis isolate Hiks1. This Arabidopsis thaliana (Mouse-ear cress) protein is ASI1-immunoprecipitated protein 1.